Reading from the N-terminus, the 448-residue chain is Tryptophan--tRNA ligase (448 aa).

ATP-binding positions include 10-12 and 18-19; these read TPT and GN. The 'HIGH' region signature appears at 11–19; that stretch reads PTGTPHLGN. Position 143 (aspartate 143) interacts with L-tryptophan. ATP contacts are provided by residues 155 to 157, leucine 197, and 204 to 208; these read GRD and KMSKS. A 'KMSKS' region motif is present at residues 204–208; sequence KMSKS.

The protein belongs to the class-I aminoacyl-tRNA synthetase family. Homodimer.

It is found in the cytoplasm. It catalyses the reaction tRNA(Trp) + L-tryptophan + ATP = L-tryptophyl-tRNA(Trp) + AMP + diphosphate + H(+). Its function is as follows. Catalyzes the attachment of tryptophan to tRNA(Trp). This is Tryptophan--tRNA ligase from Pseudomonas aeruginosa (strain ATCC 15692 / DSM 22644 / CIP 104116 / JCM 14847 / LMG 12228 / 1C / PRS 101 / PAO1).